The primary structure comprises 809 residues: Sucrose synthase 3 (809 aa).

Positions M277 to T755 are GT-B glycosyltransferase.

It belongs to the glycosyltransferase 1 family. Plant sucrose synthase subfamily. In terms of tissue distribution, detected in the whole plant with highest expression in developing siliques, vasculature of cotyledons and stomatal guard cells. Also detected throughout the mature parts of the root but not in the expanding zone.

The enzyme catalyses an NDP-alpha-D-glucose + D-fructose = a ribonucleoside 5'-diphosphate + sucrose + H(+). In terms of biological role, sucrose-cleaving enzyme that provides UDP-glucose and fructose for various metabolic pathways. Modulates metabolic homeostasis and direct carbon towards starch synthesis in developing seeds. The sequence is that of Sucrose synthase 3 (SUS3) from Arabidopsis thaliana (Mouse-ear cress).